A 1707-amino-acid polypeptide reads, in one-letter code: Mediator of DNA damage checkpoint protein 1 (1707 aa).

The interval 1–23 (MESTQVIDWDAEEEEETELSSGS) is disordered. The tract at residues 1–150 (MESTQVIDWD…PRSLLTIEKT (150 aa)) is interaction with CHEK2. Residues 2 to 222 (ESTQVIDWDA…SSPFGLGSDT (221 aa)) are interaction with the MRN complex. Thr4 bears the Phosphothreonine mark. A compositionally biased stretch (acidic residues) spans 9–18 (WDAEEEEETE). One can recognise an FHA domain in the interval 54-105 (NVVGRSPDCSVALPFPSISKQHAVIEISAWNKAPILQDCGSLNGTQIVKPPR). Residue Thr146 is modified to Phosphothreonine. Positions 166–328 (ADSEEEGDFP…EERIPVTPPV (163 aa)) are disordered. Residues Ser168 and Ser176 each carry the phosphoserine modification. Positions 183–192 (GQRNTASPSA) are enriched in polar residues. Phosphoserine occurs at positions 198 and 220. Thr222 bears the Phosphothreonine mark. The span at 252–263 (ANGTTAGIQAQP) shows a compositional bias: polar residues. Positions 264–278 (TEHKLKDTKVKKEAG) are enriched in basic and acidic residues. Ser298 carries the post-translational modification Phosphoserine. The residue at position 300 (Thr300) is a Phosphothreonine. Phosphoserine is present on Ser313. Thr315 bears the Phosphothreonine mark. Ser360 is subject to Phosphoserine. At Thr362 the chain carries Phosphothreonine. Basic and acidic residues predominate over residues 369–378 (ALDVPLERNH). The interval 369 to 398 (ALDVPLERNHTPMVINSDTDEEEEEEEEVS) is disordered. Ser385 carries the phosphoserine modification. The segment covering 386 to 397 (DTDEEEEEEEEV) has biased composition (acidic residues). At Thr387 the chain carries Phosphothreonine. Residues Ser398, Ser415, Ser425, Ser438, and Ser442 each carry the phosphoserine modification. Disordered regions lie at residues 417-497 (DPGA…PGSH), 520-642 (PGPS…AKEC), 679-699 (LFPC…QTPG), and 718-746 (REQS…HQHL). The segment covering 425 to 439 (SQPQVLVEQSQSASG) has biased composition (polar residues). Thr444 is modified (phosphothreonine). Ser461 carries the post-translational modification Phosphoserine. Phosphothreonine is present on Thr470. 5 positions are modified to phosphoserine: Ser492, Ser493, Ser591, Ser593, and Ser595. Over residues 580–595 (VSEQESTLEVRSQSGS) the composition is skewed to polar residues. A compositionally biased stretch (basic and acidic residues) spans 626–642 (GREREAHVGRTKSAKEC). The segment covering 719–730 (EQSETSELHEAH) has biased composition (basic and acidic residues). A phosphoserine mark is found at Ser735 and Ser750. Position 769 is an N6-acetyllysine (Lys769). 3 stretches are compositionally biased toward basic and acidic residues: residues 778-804 (ADRM…RDVI), 812-868 (TKDR…REWE), and 875-889 (TPDR…HDQK). Disordered stretches follow at residues 778-899 (ADRM…TLKP) and 914-1510 (IITG…QETA). 3 positions are modified to phosphoserine: Ser885, Ser929, and Ser962. Low complexity predominate over residues 968 to 986 (STQSLLTSQSQKQSTPQPL). Phosphoserine is present on Ser991. 3 stretches are compositionally biased toward polar residues: residues 1026–1056 (PNTT…STRT), 1068–1086 (QPST…SQVT), and 1101–1113 (EIQS…QSVT). Position 1056 is a phosphothreonine (Thr1056). 3 positions are modified to phosphoserine: Ser1104, Ser1126, and Ser1128. 3 positions are modified to phosphothreonine: Thr1132, Thr1173, and Thr1234. Composition is skewed to polar residues over residues 1225 to 1241 (PLTS…TSRA), 1265 to 1281 (PSTS…SSQA), 1295 to 1308 (VPTT…TSKK), and 1317 to 1326 (LVTQGRTYKP). Thr1297 and Thr1298 each carry phosphothreonine. Ser1327 bears the Phosphoserine mark. The span at 1343–1363 (PSTSTDHLVTPKVTDQSLTLQ) shows a compositional bias: polar residues. Residue Thr1352 is modified to Phosphothreonine. At Ser1359 the chain carries Phosphoserine. Residues 1364-1376 (SSPLSASPVSSTP) show a composition bias toward low complexity. The residue at position 1375 (Thr1375) is a Phosphothreonine. Positions 1378-1393 (LKPPVPIAQPVTPEPI) are enriched in pro residues. A Glycyl lysine isopeptide (Lys-Gly) (interchain with G-Cter in SUMO2) cross-link involves residue Lys1418. Residues 1421-1441 (SALSEPEPQSSASQSSGASEA) show a composition bias toward low complexity. Phosphoserine is present on residues Ser1435, Ser1436, Ser1439, and Ser1443. Basic and acidic residues predominate over residues 1459-1473 (VIKEEPVETEVKEEP). Lys1461 participates in a covalent cross-link: Glycyl lysine isopeptide (Lys-Gly) (interchain with G-Cter in SUMO1); alternate. A Glycyl lysine isopeptide (Lys-Gly) (interchain with G-Cter in SUMO2); alternate cross-link involves residue Lys1461. Thr1480 carries the phosphothreonine modification. Positions 1481-1493 (PEKRKRDHAEEVT) are enriched in basic and acidic residues. An N6-acetyllysine modification is found at Lys1496. 2 consecutive BRCT domains span residues 1510–1588 (APKV…DYLV) and 1609–1700 (RERR…FVLS).

As to quaternary structure, homodimer. Interacts with H2AX, which requires phosphorylation of H2AX on 'Ser-139'. Interacts with the MRN complex, composed of MRE11, RAD50, and NBN. Interacts with CHEK2, which requires ATM-mediated phosphorylation of 'Thr-68' within the FHA domain of CHEK2. Interacts constitutively with the BRCA1-BARD1 complex, SMC1A and TP53BP1. Interacts with ATM and FANCD2, and these interactions are reduced upon DNA damage. Also interacts with the PRKDC complex, composed of XRCC6/KU70, XRCC5/KU80 and PRKDC/XRCC7. This interaction may be required for PRKDC autophosphorylation, which is essential for DNA double strand break (DSB) repair. When phosphorylated by ATM, interacts with RNF8 (via FHA domain). Interacts with CEP164. When phosphorylated, interacts with APTX (via FHA-like domain). Interacts (when phosphorylated) with TOPBP1; promoting TOPBP1 localization to DNA damage sites during mitosis. Interacts (when phosphorylated) with NBN; promoting NBN and MRN complex localization to DNA damage sites. Phosphorylated upon exposure to ionizing radiation (IR), ultraviolet radiation (UV), and hydroxyurea (HU). Phosphorylation in response to IR requires ATM, NBN, and possibly CHEK2. Also phosphorylated during the G2/M phase of the cell cycle and during activation of the mitotic spindle checkpoint. Phosphorylation at Thr-4 by ATM stabilizes and enhances homodimerization via the FHA domain. Phosphorylated at Ser-168 and Ser-198 by CK2 in response to DNA damage during mitosis, promoting interaction with TOPBP1. Phosphorylated by CK2 in response to DNA damage, promoting interaction with NBN and recruitment of the MRN complex to DNA damage sites. Post-translationally, sumoylation at Lys-1461 by PIAS4 following DNA damage promotes ubiquitin-mediated degradation. In terms of processing, ubiquitinated by RNF4, leading to proteasomal degradation; undergoes 'Lys-48'-linked polyubiquitination.

It is found in the nucleus. Its subcellular location is the chromosome. Histone reader protein required for checkpoint-mediated cell cycle arrest in response to DNA damage within both the S phase and G2/M phases of the cell cycle. Specifically recognizes and binds histone H2AX phosphorylated at 'Ser-139', a marker of DNA damage, serving as a scaffold for the recruitment of DNA repair and signal transduction proteins to discrete foci of DNA damage sites. Also required for downstream events subsequent to the recruitment of these proteins. These include phosphorylation and activation of the ATM, CHEK1 and CHEK2 kinases, and stabilization of TP53/p53 and apoptosis. ATM and CHEK2 may also be activated independently by a parallel pathway mediated by TP53BP1. Required for chromosomal stability during mitosis by promoting recruitment of TOPBP1 to DNA double strand breaks (DSBs): TOPBP1 forms filamentous assemblies that bridge MDC1 and tether broken chromosomes during mitosis. Required for the repair of DSBs via homologous recombination by promoting recruitment of NBN component of the MRN complex to DSBs. This Mus musculus (Mouse) protein is Mediator of DNA damage checkpoint protein 1 (Mdc1).